The sequence spans 424 residues: UDP-sugar transporter protein SLC35A5 (424 aa).

Topologically, residues 1–8 (MEKQCCSH) are cytoplasmic. The chain crosses the membrane as a helical span at residues 9 to 29 (PVICSLSTMYTFLLGAIFIAL). Residues 30–53 (SSSRILLVKYSANEENKYDYLPTT) lie on the Lumenal side of the membrane. Residues 54–74 (ANVCSELVKLVFCVLVSFCVI) form a helical membrane-spanning segment. At 75 to 93 (KKDHQSRNLKYASWKEFSN) the chain is on the cytoplasmic side. A helical transmembrane segment spans residues 94–116 (FMKWSIPAFLYFLDNLIVFYVLS). The Lumenal segment spans residues 117 to 119 (YLQ). The chain crosses the membrane as a helical span at residues 120–142 (PAMAVIFSNFSIITTALLFRIVL). Topologically, residues 143–147 (KRRLN) are cytoplasmic. The helical transmembrane segment at 148-168 (WIQWASLLILFLSIVALTAGT) threads the bilayer. Residues 169–228 (KTLQHNLAGHGFHHDAFFSPSNSCLLFRSECPRKDNCTAKEWTFPEAKWNTTARVFSHIR) are Lumenal-facing. N-linked (GlcNAc...) asparagine glycosylation is present at asparagine 204. Residues 229-249 (LGMGHVLIIVQCFISSMANIY) form a helical membrane-spanning segment. The Cytoplasmic segment spans residues 250–263 (NEKILKEGNQLAES). The helical transmembrane segment at 264 to 284 (IFIQNSKLYFFGILFNGLTLG) threads the bilayer. At 285–303 (LQRSNRDQIKNCGFFYGHN) the chain is on the lumenal side. A helical membrane pass occupies residues 304-324 (AFSVALIFVTAFQGLSVAFIL). Residues 325-330 (KFLDNM) lie on the Cytoplasmic side of the membrane. A helical transmembrane segment spans residues 331-351 (FHVLMAQVTTVIITTVSVLVF). At 352–354 (DFR) the chain is on the lumenal side. The chain crosses the membrane as a helical span at residues 355–375 (PSLEFFLEAPSVLLSIFIYNA). Topologically, residues 376–424 (SKPQGPEYAPRQERIRDLSGNLWERSSGDGEELERLTKPKSDESDEDTF) are cytoplasmic. Phosphoserine is present on residues serine 394, serine 416, and serine 419. A disordered region spans residues 395-424 (GNLWERSSGDGEELERLTKPKSDESDEDTF). Basic and acidic residues predominate over residues 408–417 (LERLTKPKSD).

This sequence belongs to the nucleotide-sugar transporter family. SLC35A subfamily. Probably forms homooligomers and heterooligomers with SLC35A1, SLC35A2, SLC35A3 and SLC35A4.

It is found in the golgi apparatus membrane. The enzyme catalyses UMP(out) + UDP-alpha-D-glucuronate(in) = UMP(in) + UDP-alpha-D-glucuronate(out). The catalysed reaction is UMP(out) + UDP-N-acetyl-alpha-D-glucosamine(in) = UMP(in) + UDP-N-acetyl-alpha-D-glucosamine(out). It carries out the reaction UDP-N-acetyl-alpha-D-galactosamine(in) + UMP(out) = UDP-N-acetyl-alpha-D-galactosamine(out) + UMP(in). In terms of biological role, probable UDP-sugar:UMP transmembrane antiporter involved in UDP-alpha-D-glucuronate/UDP-GlcA, UDP-GlcNAc/UDP-N-acetyl-alpha-D-glucosamine and UDP-N-acetyl-alpha-D-galactosamine/UDP-GalNAc transport from the cytosol to the lumen of the Golgi. This chain is UDP-sugar transporter protein SLC35A5, found in Pongo abelii (Sumatran orangutan).